Here is a 595-residue protein sequence, read N- to C-terminus: Protein UL31 (595 aa).

The first 23 residues, 1–23 (MGDKPTLVTLLTVAVSSPPPSSP), serve as a signal peptide directing secretion. Positions 47–94 (TATSEVGEKTAEQEVAAADPETGNERRENRENEGGETRTTGTTAVKRS) are disordered. A compositionally biased stretch (basic and acidic residues) spans 69–82 (GNERRENRENEGGE). N176 and N197 each carry an N-linked (GlcNAc...) asparagine; by host glycan.

This sequence belongs to the herpesviridae U10 family. As to quaternary structure, interacts with host CGAS.

The protein localises to the host cytoplasm. It is found in the host nucleus. Plays a role in the inhibition of host innate immune system by targeting host CGAS and promoting dissociation of DNA from CGAS, thereby inhibiting the enzymatic activity of CGAS. The polypeptide is Protein UL31 (Homo sapiens (Human)).